Reading from the N-terminus, the 644-residue chain is Zinc finger protein 568 (644 aa).

Positions 48–119 constitute a KRAB domain; sequence VTFKDVAVDL…EEEMFGRHCP (72 aa). 15 consecutive C2H2-type zinc fingers follow at residues 222–244, 250–272, 278–300, 306–328, 334–356, 362–384, 390–412, 418–440, 446–468, 474–496, 502–524, 530–552, 558–580, 586–608, and 614–636; these read FKCN…ERIH, YECK…QKIH, YKCN…HRIH, YACK…ERIH, YECK…EKIH, YACN…MRSH, YKCN…MRSH, YVCS…MRNH, YECS…QRIH, YACT…EKIH, YHCN…EKIH, FKCN…VRSH, YECN…MRSH, and FECN…KRGH.

Belongs to the krueppel C2H2-type zinc-finger protein family. As to quaternary structure, interacts with TRIM28.

The protein resides in the nucleus. In terms of biological role, has transcriptional repression activity, partially through the recruitment of the corepressor TRIM28 but also has repression activity independently of this interaction. Essential during embryonic development, where it acts as a direct repressor of a placental-specific transcript of IGF2 in early development and regulates convergent extension movements required for axis elongation and tissue morphogenesis in all germ layers. Also important for normal morphogenesis of extraembryonic tissues including the yolk sac, extraembryonic mesoderm and placenta. May enhance proliferation or maintenance of neural stem cells. This chain is Zinc finger protein 568 (ZNF568), found in Homo sapiens (Human).